The primary structure comprises 1199 residues: Transcription initiation factor TFIID subunit 2 (1199 aa).

3 disordered regions span residues methionine 1–proline 23, arginine 1067–glutamine 1102, and lysine 1136–aspartate 1199. The span at cysteine 1093–glutamine 1102 shows a compositional bias: polar residues. The span at serine 1144 to histidine 1171 shows a compositional bias: basic residues. A compositionally biased stretch (polar residues) spans threonine 1182 to aspartate 1199. Residues serine 1185, serine 1188, serine 1194, serine 1196, and serine 1198 each carry the phosphoserine modification.

It belongs to the TAF2 family. As to quaternary structure, component of the TFIID basal transcription factor complex, composed of TATA-box-binding protein TBP, and a number of TBP-associated factors (TAFs), including TAF1, TAF2, TAF3, TAF4, TAF5, TAF6, TAF7, TAF8, TAF9, TAF10, TAF11, TAF12 and TAF13. Interacts with TAF2C1. Component of the TFTC-HAT complex. As to expression, expressed in all tissues tested.

The protein localises to the nucleus. The TFIID basal transcription factor complex plays a major role in the initiation of RNA polymerase II (Pol II)-dependent transcription. TFIID recognizes and binds promoters with or without a TATA box via its subunit TBP, a TATA-box-binding protein, and promotes assembly of the pre-initiation complex (PIC). The TFIID complex consists of TBP and TBP-associated factors (TAFs), including TAF1, TAF2, TAF3, TAF4, TAF5, TAF6, TAF7, TAF8, TAF9, TAF10, TAF11, TAF12 and TAF13. TAF2 forms a promoter DNA binding subcomplex of TFIID, together with TAF7 and TAF1. This is Transcription initiation factor TFIID subunit 2 (TAF2) from Homo sapiens (Human).